Here is a 184-residue protein sequence, read N- to C-terminus: UPF0398 protein OB1025 (184 aa).

It belongs to the UPF0398 family.

The chain is UPF0398 protein OB1025 from Oceanobacillus iheyensis (strain DSM 14371 / CIP 107618 / JCM 11309 / KCTC 3954 / HTE831).